Reading from the N-terminus, the 762-residue chain is 5-methyltetrahydropteroyltriglutamate--homocysteine methyltransferase (762 aa).

5-methyltetrahydropteroyltri-L-glutamate-binding positions include 17–20 (REWK) and lysine 111. L-homocysteine-binding positions include 435–437 (IGS) and glutamate 488. Residues 435 to 437 (IGS) and glutamate 488 contribute to the L-methionine site. Residues 519 to 520 (RC) and tryptophan 565 each bind 5-methyltetrahydropteroyltri-L-glutamate. Aspartate 603 provides a ligand contact to L-homocysteine. Position 603 (aspartate 603) interacts with L-methionine. Glutamate 609 provides a ligand contact to 5-methyltetrahydropteroyltri-L-glutamate. Residues histidine 645, cysteine 647, and glutamate 669 each contribute to the Zn(2+) site. Histidine 698 functions as the Proton donor in the catalytic mechanism. Zn(2+) is bound at residue cysteine 730.

This sequence belongs to the vitamin-B12 independent methionine synthase family. The cofactor is Zn(2+).

The catalysed reaction is 5-methyltetrahydropteroyltri-L-glutamate + L-homocysteine = tetrahydropteroyltri-L-glutamate + L-methionine. It functions in the pathway amino-acid biosynthesis; L-methionine biosynthesis via de novo pathway; L-methionine from L-homocysteine (MetE route): step 1/1. In terms of biological role, catalyzes the transfer of a methyl group from 5-methyltetrahydrofolate to homocysteine resulting in methionine formation. This Bacillus cereus (strain AH820) protein is 5-methyltetrahydropteroyltriglutamate--homocysteine methyltransferase.